Here is a 371-residue protein sequence, read N- to C-terminus: Cysteine proteinase 1 (371 aa).

Residues 1-18 (MAHRVLLLLSLASAAAVA) form the signal peptide. Residues 19–136 (AAVDAEDPLI…HEAPVLPTDG (118 aa)) constitute a propeptide, activation peptide. 2 disulfides stabilise this stretch: C158–C208 and C192–C241. The active site involves C161. Residue N254 is glycosylated (N-linked (GlcNAc...) asparagine). The cysteines at positions 297 and 354 are disulfide-linked. Catalysis depends on residues H303 and N330.

It belongs to the peptidase C1 family. As to expression, expressed during the late stages of seed ripening, in mature seeds and during germination.

Involved in the degradation of the storage protein zein. May play a role in proteolysis during emergencies. In Zea mays (Maize), this protein is Cysteine proteinase 1 (CCP1).